The sequence spans 895 residues: Procollagen lysyl hydroxylase and glycosyltransferase (895 aa).

Residues Met1–His194 are lysyl hydroxylase region. Positions Tyr537 to Asn895 are glucosyl transferase region. The 91-residue stretch at Asp805–Asn895 folds into the Fe2OG dioxygenase domain. Fe cation-binding residues include His825, Asp827, and His877. Residue Arg887 is part of the active site.

The cofactor is Fe cation. Requires L-ascorbate as cofactor.

The enzyme catalyses L-lysyl-[collagen] + 2-oxoglutarate + O2 = (5R)-5-hydroxy-L-lysyl-[collagen] + succinate + CO2. Displays two enzymatic activities involved in procollagen processing. Forms hydroxylysine residues in -Xaa-Lys-Gly- sequences in collagens. These hydroxylysines are subsequentially glucosylated by a glucosyltransferase activity. Collagen post-translationally modified is detected in mimivirus virion. In Acanthamoeba polyphaga (Amoeba), this protein is Procollagen lysyl hydroxylase and glycosyltransferase.